The chain runs to 160 residues: 2-C-methyl-D-erythritol 2,4-cyclodiphosphate synthase (160 aa).

A divalent metal cation-binding residues include D8 and H10. 4-CDP-2-C-methyl-D-erythritol 2-phosphate is bound by residues 8-10 (DVH) and 34-35 (HS). A divalent metal cation is bound at residue H42. Residues 56–58 (DIG), 61–65 (FPDTD), 100–106 (AQAPKML), 132–135 (TTTE), F139, and R142 each bind 4-CDP-2-C-methyl-D-erythritol 2-phosphate.

The protein belongs to the IspF family. In terms of assembly, homotrimer. It depends on a divalent metal cation as a cofactor.

It carries out the reaction 4-CDP-2-C-methyl-D-erythritol 2-phosphate = 2-C-methyl-D-erythritol 2,4-cyclic diphosphate + CMP. It functions in the pathway isoprenoid biosynthesis; isopentenyl diphosphate biosynthesis via DXP pathway; isopentenyl diphosphate from 1-deoxy-D-xylulose 5-phosphate: step 4/6. Its function is as follows. Involved in the biosynthesis of isopentenyl diphosphate (IPP) and dimethylallyl diphosphate (DMAPP), two major building blocks of isoprenoid compounds. Catalyzes the conversion of 4-diphosphocytidyl-2-C-methyl-D-erythritol 2-phosphate (CDP-ME2P) to 2-C-methyl-D-erythritol 2,4-cyclodiphosphate (ME-CPP) with a corresponding release of cytidine 5-monophosphate (CMP). This chain is 2-C-methyl-D-erythritol 2,4-cyclodiphosphate synthase, found in Proteus mirabilis (strain HI4320).